Here is a 160-residue protein sequence, read N- to C-terminus: Large ribosomal subunit protein uL15 (160 aa).

Positions 1–13 (MKLHELSDNDGAA) are enriched in basic and acidic residues. The disordered stretch occupies residues 1 to 42 (MKLHELSDNDGAAKKRKRVGRGPGSGTGKMGGRGIKGQKSRS). A compositionally biased stretch (gly residues) spans 21–35 (RGPGSGTGKMGGRGI).

This sequence belongs to the universal ribosomal protein uL15 family. As to quaternary structure, part of the 50S ribosomal subunit.

Its function is as follows. Binds to the 23S rRNA. This Roseobacter denitrificans (strain ATCC 33942 / OCh 114) (Erythrobacter sp. (strain OCh 114)) protein is Large ribosomal subunit protein uL15.